The primary structure comprises 647 residues: MINITFPDGAVREFESGVTTFEIAQSISNSLAKKALAGKFNGKLIDTTRAITEDGSIEIVTPDHEDALPILRHSAAHLFAQAARRLFPDIHLGVGPAIEDGFYYDTDNTAGQISNEDLPRIEEEMQKIVKENFPSIREEVTKDEAREIFKNDPYKLELIEEHSEDEGGLTIYRQGEYVDLCRGPHVPSTGRIQIFHLLHVAGAYWRGNSDNAMMQRIYGTAWFEKKDLKNYLQMREEAKERDHRKLGKELDLFMISQEVGQGLPFWLPNGATIRRELERYIVNKELASGYQHVYTPPLASVELYKTSGHWDHYQEDMFPTMDMGDGEEFVLRPMNCPHHIQVFKHHVHSYRELPIRIAEIGMMHRYEKSGALTGLQRVREMSLNDGHLFVTPEQIQEEFQRALQLIIDVYEDFNLTDYRFRLSLRDPQDTHKYFDNDEMWENAQTMLRAALDEMGVDYFEAEGEAAFYGPKLDIQIKTALGKEETLSTIQLDFLLPERFDLKYIGADGEDHRPVMIHRGAISTMERFTAILIENYKGAFPTWLAPHQVTLIPVSNEKHVDYAWEVAKKLRDRGVRADVDERNEKMQFKIRASQTSKIPYQLIVGDKEMEDETVNVRRYGQKETQTVSVDNFVQAILADIANKSRVEK.

In terms of domain architecture, TGS spans 1-61 (MINITFPDGA…TEDGSIEIVT (61 aa)). The catalytic stretch occupies residues 242 to 540 (DHRKLGKELD…LIENYKGAFP (299 aa)). Zn(2+)-binding residues include Cys336, His387, and His517.

The protein belongs to the class-II aminoacyl-tRNA synthetase family. As to quaternary structure, homodimer. The cofactor is Zn(2+).

It localises to the cytoplasm. It catalyses the reaction tRNA(Thr) + L-threonine + ATP = L-threonyl-tRNA(Thr) + AMP + diphosphate + H(+). In terms of biological role, catalyzes the attachment of threonine to tRNA(Thr) in a two-step reaction: L-threonine is first activated by ATP to form Thr-AMP and then transferred to the acceptor end of tRNA(Thr). Also edits incorrectly charged L-seryl-tRNA(Thr). The polypeptide is Threonine--tRNA ligase (Streptococcus pneumoniae (strain ATCC 700669 / Spain 23F-1)).